The following is a 211-amino-acid chain: Large ribosomal subunit protein bL25 (211 aa).

Basic and acidic residues predominate over residues 1-18 (MAKTHEIKAERRADEGKG). A disordered region spans residues 1-20 (MAKTHEIKAERRADEGKGAS).

It belongs to the bacterial ribosomal protein bL25 family. CTC subfamily. In terms of assembly, part of the 50S ribosomal subunit; part of the 5S rRNA/L5/L18/L25 subcomplex. Contacts the 5S rRNA. Binds to the 5S rRNA independently of L5 and L18.

In terms of biological role, this is one of the proteins that binds to the 5S RNA in the ribosome where it forms part of the central protuberance. In Xanthomonas oryzae pv. oryzae (strain MAFF 311018), this protein is Large ribosomal subunit protein bL25.